The following is a 222-amino-acid chain: 7-cyano-7-deazaguanine synthase (222 aa).

14-24 (FSGGQDSTTCL) contributes to the ATP binding site. Positions 190, 199, 202, and 205 each coordinate Zn(2+).

The protein belongs to the QueC family. In terms of assembly, homodimer. Requires Zn(2+) as cofactor.

It carries out the reaction 7-carboxy-7-deazaguanine + NH4(+) + ATP = 7-cyano-7-deazaguanine + ADP + phosphate + H2O + H(+). Its pathway is purine metabolism; 7-cyano-7-deazaguanine biosynthesis. Its function is as follows. Catalyzes the ATP-dependent conversion of 7-carboxy-7-deazaguanine (CDG) to 7-cyano-7-deazaguanine (preQ(0)). This chain is 7-cyano-7-deazaguanine synthase, found in Staphylococcus aureus (strain bovine RF122 / ET3-1).